The primary structure comprises 209 residues: Protease (209 aa).

Active-site residues include histidine 55, aspartate 72, and cysteine 123.

The protein belongs to the peptidase C5 family. Interacts with protease cofactor pVI-C; this interaction is necessary for protease activation.

It localises to the virion. The protein resides in the host nucleus. It catalyses the reaction Cleaves proteins of the adenovirus and its host cell at two consensus sites: -Yaa-Xaa-Gly-Gly-|-Xaa- and -Yaa-Xaa-Gly-Xaa-|-Gly- (in which Yaa is Met, Ile or Leu, and Xaa is any amino acid).. Its activity is regulated as follows. Requires DNA and protease cofactor for maximal activation. Inside nascent virions, becomes partially activated by binding to the viral DNA, allowing it to cleave the cofactor that binds to the protease and fully activates it. Actin, like the viral protease cofactor, seems to act as a cofactor in the cleavage of cytokeratin 18 and of actin itself. In terms of biological role, cleaves viral precursor proteins (pTP, pIIIa, pVI, pVII, pVIII, and pX) inside newly assembled particles giving rise to mature virions. Protease complexed to its cofactor slides along the viral DNA to specifically locate and cleave the viral precursors. Mature virions have a weakened organization compared to the unmature virions, thereby facilitating subsequent uncoating. Without maturation, the particle lacks infectivity and is unable to uncoat. Late in adenovirus infection, in the cytoplasm, may participate in the cytoskeleton destruction. Cleaves host cell cytoskeletal keratins K7 and K18. This chain is Protease, found in Human adenovirus D serotype 17 (HAdV-17).